Here is a 267-residue protein sequence, read N- to C-terminus: Diphthine--ammonia ligase (267 aa).

The residue at position 97 (Tyr97) is a Phosphotyrosine.

Belongs to the Diphthine--ammonia ligase family.

It carries out the reaction diphthine-[translation elongation factor 2] + NH4(+) + ATP = diphthamide-[translation elongation factor 2] + AMP + diphosphate + H(+). It participates in protein modification; peptidyl-diphthamide biosynthesis. Amidase that catalyzes the last step of diphthamide biosynthesis using ammonium and ATP. Diphthamide biosynthesis consists in the conversion of an L-histidine residue in the translation elongation factor eEF-2 (EEF2) to diphthamide. This Rattus norvegicus (Rat) protein is Diphthine--ammonia ligase (Dph6).